Here is a 283-residue protein sequence, read N- to C-terminus: Pantothenate synthetase (283 aa).

30-37 (MGNLHDGH) is a binding site for ATP. H37 (proton donor) is an active-site residue. Q61 lines the (R)-pantoate pocket. Residue Q61 coordinates beta-alanine. 149–152 (GEKD) serves as a coordination point for ATP. Q155 serves as a coordination point for (R)-pantoate. 186–189 (LSSR) provides a ligand contact to ATP.

It belongs to the pantothenate synthetase family. In terms of assembly, homodimer.

It localises to the cytoplasm. It carries out the reaction (R)-pantoate + beta-alanine + ATP = (R)-pantothenate + AMP + diphosphate + H(+). Its pathway is cofactor biosynthesis; (R)-pantothenate biosynthesis; (R)-pantothenate from (R)-pantoate and beta-alanine: step 1/1. In terms of biological role, catalyzes the condensation of pantoate with beta-alanine in an ATP-dependent reaction via a pantoyl-adenylate intermediate. This Escherichia coli O6:H1 (strain CFT073 / ATCC 700928 / UPEC) protein is Pantothenate synthetase.